The chain runs to 270 residues: Phosphonates import ATP-binding protein PhnC (270 aa).

In terms of domain architecture, ABC transporter spans 2–245 (LVIEGLTCRF…IARELYDLEA (244 aa)). An ATP-binding site is contributed by 34 to 41 (GRSGAGKS).

Belongs to the ABC transporter superfamily. Phosphonates importer (TC 3.A.1.9.1) family. As to quaternary structure, the complex is composed of two ATP-binding proteins (PhnC), two transmembrane proteins (PhnE) and a solute-binding protein (PhnD).

It is found in the cell inner membrane. The enzyme catalyses phosphonate(out) + ATP + H2O = phosphonate(in) + ADP + phosphate + H(+). Part of the ABC transporter complex PhnCDE involved in phosphonates import. Responsible for energy coupling to the transport system. The protein is Phosphonates import ATP-binding protein PhnC of Rhodopseudomonas palustris (strain BisB5).